A 73-amino-acid chain; its full sequence is Dipeptidyl peptidase 3 (73 aa).

Belongs to the peptidase M49 family. Requires Zn(2+) as cofactor.

It is found in the membrane. The catalysed reaction is Release of an N-terminal dipeptide from a peptide comprising four or more residues, with broad specificity. Also acts on dipeptidyl 2-naphthylamides.. Its function is as follows. Degrades neuropeptide proctolin (RYLPT) by cleavage between Tyr and Leu residues. The protein is Dipeptidyl peptidase 3 of Blaberus craniifer (Death's head cockroach).